A 437-amino-acid polypeptide reads, in one-letter code: Phosphomethylpyrimidine synthase (437 aa).

Substrate-binding positions include Asn69, Met98, Tyr127, His163, 185–187 (SRG), 226–229 (DALR), and Glu265. Residue His269 coordinates Zn(2+). Tyr292 contributes to the substrate binding site. His333 serves as a coordination point for Zn(2+). 3 residues coordinate [4Fe-4S] cluster: Cys409, Cys412, and Cys416.

It belongs to the ThiC family. [4Fe-4S] cluster serves as cofactor.

The catalysed reaction is 5-amino-1-(5-phospho-beta-D-ribosyl)imidazole + S-adenosyl-L-methionine = 4-amino-2-methyl-5-(phosphooxymethyl)pyrimidine + CO + 5'-deoxyadenosine + formate + L-methionine + 3 H(+). It functions in the pathway cofactor biosynthesis; thiamine diphosphate biosynthesis. Catalyzes the synthesis of the hydroxymethylpyrimidine phosphate (HMP-P) moiety of thiamine from aminoimidazole ribotide (AIR) in a radical S-adenosyl-L-methionine (SAM)-dependent reaction. The polypeptide is Phosphomethylpyrimidine synthase (Alkaliphilus oremlandii (strain OhILAs) (Clostridium oremlandii (strain OhILAs))).